The sequence spans 236 residues: Glucosamine-6-phosphate deaminase (236 aa).

Catalysis depends on aspartate 62, which acts as the Proton acceptor; for enolization step. Residue asparagine 128 is the For ring-opening step of the active site. Histidine 130 acts as the Proton acceptor; for ring-opening step in catalysis. Glutamate 135 (for ring-opening step) is an active-site residue.

The protein belongs to the glucosamine/galactosamine-6-phosphate isomerase family. NagB subfamily.

The catalysed reaction is alpha-D-glucosamine 6-phosphate + H2O = beta-D-fructose 6-phosphate + NH4(+). It functions in the pathway amino-sugar metabolism; N-acetylneuraminate degradation; D-fructose 6-phosphate from N-acetylneuraminate: step 5/5. Its function is as follows. Catalyzes the reversible isomerization-deamination of glucosamine 6-phosphate (GlcN6P) to form fructose 6-phosphate (Fru6P) and ammonium ion. This Pediococcus pentosaceus (strain ATCC 25745 / CCUG 21536 / LMG 10740 / 183-1w) protein is Glucosamine-6-phosphate deaminase.